Reading from the N-terminus, the 346-residue chain is UDP-3-O-acylglucosamine N-acyltransferase (346 aa).

His-253 functions as the Proton acceptor in the catalytic mechanism.

It belongs to the transferase hexapeptide repeat family. LpxD subfamily. Homotrimer.

The catalysed reaction is a UDP-3-O-[(3R)-3-hydroxyacyl]-alpha-D-glucosamine + a (3R)-hydroxyacyl-[ACP] = a UDP-2-N,3-O-bis[(3R)-3-hydroxyacyl]-alpha-D-glucosamine + holo-[ACP] + H(+). It participates in bacterial outer membrane biogenesis; LPS lipid A biosynthesis. In terms of biological role, catalyzes the N-acylation of UDP-3-O-acylglucosamine using 3-hydroxyacyl-ACP as the acyl donor. Is involved in the biosynthesis of lipid A, a phosphorylated glycolipid that anchors the lipopolysaccharide to the outer membrane of the cell. The protein is UDP-3-O-acylglucosamine N-acyltransferase of Rickettsia akari (strain Hartford).